Consider the following 439-residue polypeptide: Casein kinase I homolog 3 (439 aa).

Residues 15-286 (YRVGKKIGEG…LRSLFDSLLL (272 aa)) enclose the Protein kinase domain. ATP-binding positions include 21–29 (IGEGSFGML) and Lys44. The active-site Proton acceptor is Asp134. The tract at residues 366 to 426 (DGIPGKAASP…PSKEKSRKKF (61 aa)) is disordered. Low complexity predominate over residues 372 to 413 (AASPQVQQQQQTSSAQQQQPQRVEQPAPQTTQPTQVDTQQAA).

This sequence belongs to the protein kinase superfamily. CK1 Ser/Thr protein kinase family. Casein kinase I subfamily.

It is found in the cytoplasm. The catalysed reaction is L-seryl-[protein] + ATP = O-phospho-L-seryl-[protein] + ADP + H(+). It carries out the reaction L-threonyl-[protein] + ATP = O-phospho-L-threonyl-[protein] + ADP + H(+). In terms of biological role, casein kinases are operationally defined by their preferential utilization of acidic proteins such as caseins as substrates. The sequence is that of Casein kinase I homolog 3 (cki3) from Schizosaccharomyces pombe (strain 972 / ATCC 24843) (Fission yeast).